The sequence spans 419 residues: 3-isopropylmalate dehydratase large subunit (419 aa).

[4Fe-4S] cluster contacts are provided by cysteine 300, cysteine 360, and cysteine 363.

This sequence belongs to the aconitase/IPM isomerase family. LeuC type 2 subfamily. As to quaternary structure, heterodimer of LeuC and LeuD. The cofactor is [4Fe-4S] cluster.

The enzyme catalyses (2R,3S)-3-isopropylmalate = (2S)-2-isopropylmalate. It participates in amino-acid biosynthesis; L-leucine biosynthesis; L-leucine from 3-methyl-2-oxobutanoate: step 2/4. Functionally, catalyzes the isomerization between 2-isopropylmalate and 3-isopropylmalate, via the formation of 2-isopropylmaleate. The polypeptide is 3-isopropylmalate dehydratase large subunit (Nitratidesulfovibrio vulgaris (strain DP4) (Desulfovibrio vulgaris)).